A 511-amino-acid polypeptide reads, in one-letter code: Phospho-2-dehydro-3-deoxyheptonate aldolase 2, chloroplastic (511 aa).

The protein belongs to the class-II DAHP synthase family. In terms of tissue distribution, leaves, stems, tuber and roots.

It localises to the plastid. The protein resides in the chloroplast. It catalyses the reaction D-erythrose 4-phosphate + phosphoenolpyruvate + H2O = 7-phospho-2-dehydro-3-deoxy-D-arabino-heptonate + phosphate. It functions in the pathway metabolic intermediate biosynthesis; chorismate biosynthesis; chorismate from D-erythrose 4-phosphate and phosphoenolpyruvate: step 1/7. The protein is Phospho-2-dehydro-3-deoxyheptonate aldolase 2, chloroplastic (SHKB) of Solanum tuberosum (Potato).